The chain runs to 458 residues: Argininosuccinate lyase (458 aa).

This sequence belongs to the lyase 1 family. Argininosuccinate lyase subfamily.

The protein localises to the cytoplasm. The catalysed reaction is 2-(N(omega)-L-arginino)succinate = fumarate + L-arginine. Its pathway is amino-acid biosynthesis; L-arginine biosynthesis; L-arginine from L-ornithine and carbamoyl phosphate: step 3/3. The sequence is that of Argininosuccinate lyase from Salmonella agona (strain SL483).